Here is a 493-residue protein sequence, read N- to C-terminus: Ribose import ATP-binding protein RbsA (493 aa).

2 consecutive ABC transporter domains span residues 5 to 241 and 252 to 491; these read LKIS…VGRR and EKGE…AAAI. 37–44 serves as a coordination point for ATP; the sequence is GENGAGKS.

The protein belongs to the ABC transporter superfamily. Ribose importer (TC 3.A.1.2.1) family. In terms of assembly, the complex is composed of an ATP-binding protein (RbsA), two transmembrane proteins (RbsC) and a solute-binding protein (RbsB).

It localises to the cell inner membrane. The enzyme catalyses D-ribose(out) + ATP + H2O = D-ribose(in) + ADP + phosphate + H(+). Part of the ABC transporter complex RbsABC involved in ribose import. Responsible for energy coupling to the transport system. The sequence is that of Ribose import ATP-binding protein RbsA from Haemophilus influenzae (strain ATCC 51907 / DSM 11121 / KW20 / Rd).